The primary structure comprises 64 residues: MPKVKTHSGAKKRFALTAKGKIKRKHAFKNHMLDKKQTKQKRRLTHTALVHKSDKSRIEKLLRI.

It belongs to the bacterial ribosomal protein bL35 family.

The chain is Large ribosomal subunit protein bL35 from Amoebophilus asiaticus (strain 5a2).